Reading from the N-terminus, the 145-residue chain is Basic phospholipase A2 textilotoxin A chain (145 aa).

The signal sequence occupies residues methionine 1–alanine 19. Residues serine 20–leucine 27 constitute a propeptide that is removed on maturation. Cystine bridges form between cysteine 38-cysteine 98, cysteine 54-cysteine 144, cysteine 56-cysteine 72, cysteine 71-cysteine 125, cysteine 78-cysteine 118, cysteine 87-cysteine 111, and cysteine 105-cysteine 116. Ca(2+) contacts are provided by tyrosine 55, glycine 57, and glycine 59. Histidine 75 is an active-site residue. Aspartate 76 provides a ligand contact to Ca(2+). Aspartate 119 is a catalytic residue.

The protein belongs to the phospholipase A2 family. Group I subfamily. D49 sub-subfamily. Heterohexamer. 2 forms exist: 2 A or 2 B chains, 2 C chains and 2 covalently-linked D chains, and 1 A or 1 B, 1 C, 2 covalently-linked D chains and 2 differentially glycosylated covalently-linked D chains. Textilotoxin was originally described as pentameric. It depends on Ca(2+) as a cofactor. Expressed by the venom gland.

It localises to the secreted. It carries out the reaction a 1,2-diacyl-sn-glycero-3-phosphocholine + H2O = a 1-acyl-sn-glycero-3-phosphocholine + a fatty acid + H(+). Functionally, snake venom oligomeric phospholipase A2 that has potent presynaptic neurotoxicity. Chain A possesses a very low toxicity, but is essential for neurotoxicity. Possesses a low enzymatic activity. PLA2 catalyzes the calcium-dependent hydrolysis of the 2-acyl groups in 3-sn-phosphoglycerides. The chain is Basic phospholipase A2 textilotoxin A chain from Pseudonaja textilis (Eastern brown snake).